A 379-amino-acid chain; its full sequence is Citrate synthase (379 aa).

Residues His225, His265, and Asp316 contribute to the active site.

This sequence belongs to the citrate synthase family. In terms of assembly, homodimer.

The catalysed reaction is oxaloacetate + acetyl-CoA + H2O = citrate + CoA + H(+). The protein operates within carbohydrate metabolism; tricarboxylic acid cycle; isocitrate from oxaloacetate: step 1/2. Might regulate the synthesis and function of enzymes involved in later enzymatic steps of Krebs cycle. The protein is Citrate synthase (citZ) of Haloferax volcanii (strain ATCC 29605 / DSM 3757 / JCM 8879 / NBRC 14742 / NCIMB 2012 / VKM B-1768 / DS2) (Halobacterium volcanii).